The sequence spans 188 residues: Pyridoxal 5'-phosphate synthase subunit PdxT (188 aa).

Residue 46–48 participates in L-glutamine binding; sequence GES. The active-site Nucleophile is the cysteine 78. L-glutamine is bound by residues arginine 106 and 132–133; that span reads IR. Residues histidine 169 and glutamate 171 each act as charge relay system in the active site.

It belongs to the glutaminase PdxT/SNO family. As to quaternary structure, in the presence of PdxS, forms a dodecamer of heterodimers. Only shows activity in the heterodimer.

The enzyme catalyses aldehydo-D-ribose 5-phosphate + D-glyceraldehyde 3-phosphate + L-glutamine = pyridoxal 5'-phosphate + L-glutamate + phosphate + 3 H2O + H(+). It catalyses the reaction L-glutamine + H2O = L-glutamate + NH4(+). Its pathway is cofactor biosynthesis; pyridoxal 5'-phosphate biosynthesis. Its function is as follows. Catalyzes the hydrolysis of glutamine to glutamate and ammonia as part of the biosynthesis of pyridoxal 5'-phosphate. The resulting ammonia molecule is channeled to the active site of PdxS. The chain is Pyridoxal 5'-phosphate synthase subunit PdxT from Tropheryma whipplei (strain TW08/27) (Whipple's bacillus).